A 109-amino-acid polypeptide reads, in one-letter code: Latartoxin-2a (109 aa).

The N-terminal stretch at 1-19 is a signal peptide; sequence MKVLVIIALCLVAFQSALS. Positions 20–37 are cleaved as a propeptide — removed in mature form; sequence KKIENFESYIEDLKSEAR. The Processing quadruplet motif signature appears at 34-37; sequence SEAR. Cystine bridges form between Cys-39–Cys-56, Cys-46–Cys-67, Cys-55–Cys-81, Cys-69–Cys-79, and Cys-72–Cys-93. Val-108 is modified (valine amide).

Belongs to the neurotoxin 19 (CSTX) family. 11 (latartoxin) subfamily. In terms of processing, contains 5 disulfide bonds. Post-translationally, cleavage of the propeptide depends on the processing quadruplet motif (XXXR, with at least one of X being E). In terms of tissue distribution, expressed by the venom gland.

The protein localises to the secreted. Insect toxin. Causes paralysis in larvae of C.vicina by depolarizing membranes at the neuromuscular junction. The protein is Latartoxin-2a of Lachesana tarabaevi (Spider).